The chain runs to 355 residues: Tetraacyldisaccharide 4'-kinase (355 aa).

Residue 64–71 (YVGGTGKT) coordinates ATP. The segment at 206–226 (NRAPQSSATPTAASGQGPRRA) is disordered. Positions 208-222 (APQSSATPTAASGQG) are enriched in low complexity.

The protein belongs to the LpxK family.

It catalyses the reaction a lipid A disaccharide + ATP = a lipid IVA + ADP + H(+). Its pathway is glycolipid biosynthesis; lipid IV(A) biosynthesis; lipid IV(A) from (3R)-3-hydroxytetradecanoyl-[acyl-carrier-protein] and UDP-N-acetyl-alpha-D-glucosamine: step 6/6. Its function is as follows. Transfers the gamma-phosphate of ATP to the 4'-position of a tetraacyldisaccharide 1-phosphate intermediate (termed DS-1-P) to form tetraacyldisaccharide 1,4'-bis-phosphate (lipid IVA). The protein is Tetraacyldisaccharide 4'-kinase of Bordetella petrii (strain ATCC BAA-461 / DSM 12804 / CCUG 43448).